We begin with the raw amino-acid sequence, 189 residues long: MEVILMERVAKLGQMGDTVRVKDGYARNFLLPGGKALRATAANKARFDTQRAQLEARNLELKSEASAVAEKLDGQAFVIIRQAGETGHLYGSVSPRDIAEVVTAGGFSANRNQIVLASPIKSIGLHEVPVHLHPEVVATITVNVARSPAEAERQAAGEEVNVVEEATMDDLGLEVGAALADAGGSLGDR.

It belongs to the bacterial ribosomal protein bL9 family.

Its function is as follows. Binds to the 23S rRNA. The chain is Large ribosomal subunit protein bL9 from Methylocella silvestris (strain DSM 15510 / CIP 108128 / LMG 27833 / NCIMB 13906 / BL2).